The primary structure comprises 107 residues: uncharacterized protein (107 aa).

The Glutaredoxin domain maps to 6-107 (KKVIEQILDN…QAQVETLLAA (102 aa)). Lys23 contributes to the glutathione binding site. Cys31 serves as a coordination point for [2Fe-2S] cluster. Glutathione-binding positions include Arg60 and 85–86 (AD).

This sequence belongs to the glutaredoxin family. Monothiol subfamily.

The protein resides in the plastid. It localises to the chloroplast. This is an uncharacterized protein from Porphyra purpurea (Red seaweed).